Consider the following 223-residue polypeptide: Proteinase inhibitor type-2 TR8 (223 aa).

Residues 1–24 form the signal peptide; that stretch reads MAIYKVALLLLFGMILLASDFEHA. A run of 3 repeats spans residues 24 to 81, 88 to 145, and 152 to 209. Intrachain disulfides connect Cys-27–Cys-120, Cys-31–Cys-116, Cys-40–Cys-126, Cys-52–Cys-95, Cys-55–Cys-73, Cys-56–Cys-91, Cys-62–Cys-104, and Cys-119–Cys-137.

It belongs to the protease inhibitor I20 (potato type II proteinase inhibitor) family.

The sequence is that of Proteinase inhibitor type-2 TR8 (ARPI) from Solanum lycopersicum (Tomato).